An 854-amino-acid polypeptide reads, in one-letter code: MTASDIQPTEPHTPPTPHADTRLVDRTKLSKMYQHYVEVKDKYPHALLLYRVGDFFETFFQDAVTVARELELVLTSKHGGEVGRVAMTGVPHHAWERYTTQLVEKGYAVVICDQVEDASEAVGLVRREVTRILTPGTLLEEGMLKSSRNNYLAAVVITSNHWGLAYADISTGEFLTTQDSDLERLTQELMRLQPSEVLVPTNAPDLGTLLRPGETSPHLPECLPPSFCYSLRSQQPFSQAEARSTLLQRFKVRSLEGLGCDHLPLAVRAAGGLLEYVEDTQKAGQVSLQRLRTYTITDYLIVDNQTRRNLEITQTVRDGTFHGSLLWALDKTSTAMGSRALRRWLLQPLLDIKGISSRQDTIQELVTNTRLRQDLRHLLRQIYDLERLTGRASSGTANARDLVALADSLSRLPELANLVIDAHSPFLKALQKVPPILEELAQKIHAHLVESPPLHLKEGGLIRPGVNPLLDERKATVEADHQWIANLEVDERARTGIPLLKVGFNETFGYYISISRAKADQVPANYIRKQTLKNEERYITPELKEREARILTARDDLHKLEYEVFVTLREEVGEQAEAIRHLSRAVAAADVLCGLAELAVYQGYCRPEMVNGREIAIIDGRHPVVEQSLPAGFFVPNSTQLGSNEETHQLPDLIILTGPNASGKSCYLRQVGLIQLMAQIGSFVPAKSARLGICDRIFTRVGAVDDLATGQSTFMVEMNETANILNHATSRSLVLLDEIGRGTATFDGLSIAWAVAEYIATEIRSRTIFATHYHELNELAGMLPNVANYQVTVKELPDQIIFLHQVQPGGADKSYGIEAGRLAGLPTVVIQRAKQVMGQIEKHSKIAMGLQNLD.

The interval 1-21 (MTASDIQPTEPHTPPTPHADT) is disordered. 658 to 665 (GPNASGKS) contributes to the ATP binding site.

This sequence belongs to the DNA mismatch repair MutS family.

Its function is as follows. This protein is involved in the repair of mismatches in DNA. It is possible that it carries out the mismatch recognition step. This protein has a weak ATPase activity. The protein is DNA mismatch repair protein MutS of Trichormus variabilis (strain ATCC 29413 / PCC 7937) (Anabaena variabilis).